We begin with the raw amino-acid sequence, 235 residues long: Probable tetraspanin tspA (235 aa).

Residues 1–18 (MVDTSNLLPQTPRLLKVP) are Cytoplasmic-facing. Residues 19-39 (LIILNIILWILGLVLVIVGGI) form a helical membrane-spanning segment. Residues 40–68 (CVSFLSNFKDFTKASDAKSALSNLTTSIP) lie on the Extracellular side of the membrane. An N-linked (GlcNAc...) asparagine glycan is attached at Asn-62. The helical transmembrane segment at 69–89 (AGVLVIGILFVIFTVVGCFVA) threads the bilayer. The Cytoplasmic segment spans residues 90 to 93 (YKEK). Residues 94–114 (LVGLVIYCAVMLILLVILIGV) form a helical membrane-spanning segment. The Extracellular portion of the chain corresponds to 115–200 (GGKAITLHND…FSSKIYAVGA (86 aa)). Asn-139, Asn-143, and Asn-160 each carry an N-linked (GlcNAc...) asparagine glycan. The chain crosses the membrane as a helical span at residues 201-221 (AGLAIGIIELVAILFSLFLII). Over 222–235 (RICRSPRTRSYDQY) the chain is Cytoplasmic.

It belongs to the tetraspanin (TM4SF) family.

The protein resides in the membrane. The protein is Probable tetraspanin tspA (tspA) of Dictyostelium discoideum (Social amoeba).